A 370-amino-acid polypeptide reads, in one-letter code: 1-propanol dehydrogenase PduQ (370 aa).

This sequence belongs to the iron-containing alcohol dehydrogenase family. As to quaternary structure, interacts with PduP, probably via the N-terminus of PduQ. Requires Fe cation as cofactor.

It localises to the bacterial microcompartment. It carries out the reaction 1-propanol + NAD(+) = propanal + NADH + H(+). The protein operates within polyol metabolism; 1,2-propanediol degradation. In terms of biological role, an iron-dependent alcohol dehydrogenase required for optimal 1,2-propanediol (1,2-PD) degradation. NAD(+) and NADH are regenerated internally within the bacterial microcompartment (BMC) dedicated to 1,2-PD degradation by the PduP and PduQ enzymes, which reduce NAD(+) and oxidize NADH respectively, although there must also be cofactor transport across the BMC. Its function is as follows. Expression of a cosmid containing the full 21-gene pdu operon in E.coli allows E.coli to grow on 1,2-propanediol (1,2-PD) with the appearance of bacterial microcompartments (BMC) in its cytoplasm. The 1,2-PD-specific bacterial microcompartment (BMC) concentrates low levels of 1,2-PD catabolic enzymes, concentrates volatile reaction intermediates thus enhancing pathway flux and keeps the level of toxic, mutagenic propionaldehyde low. In Citrobacter freundii, this protein is 1-propanol dehydrogenase PduQ.